Consider the following 102-residue polypeptide: Large ribosomal subunit protein bL21 (102 aa).

It belongs to the bacterial ribosomal protein bL21 family. Part of the 50S ribosomal subunit. Contacts protein L20.

This protein binds to 23S rRNA in the presence of protein L20. In Oleidesulfovibrio alaskensis (strain ATCC BAA-1058 / DSM 17464 / G20) (Desulfovibrio alaskensis), this protein is Large ribosomal subunit protein bL21.